The following is a 368-amino-acid chain: uncharacterized protein (368 aa).

This is an uncharacterized protein from Rickettsia prowazekii (strain Madrid E).